Reading from the N-terminus, the 473-residue chain is 3-isopropylmalate dehydratase large subunit (473 aa).

[4Fe-4S] cluster contacts are provided by Cys-351, Cys-414, and Cys-417.

Belongs to the aconitase/IPM isomerase family. LeuC type 1 subfamily. In terms of assembly, heterodimer of LeuC and LeuD. The cofactor is [4Fe-4S] cluster.

The enzyme catalyses (2R,3S)-3-isopropylmalate = (2S)-2-isopropylmalate. It functions in the pathway amino-acid biosynthesis; L-leucine biosynthesis; L-leucine from 3-methyl-2-oxobutanoate: step 2/4. Catalyzes the isomerization between 2-isopropylmalate and 3-isopropylmalate, via the formation of 2-isopropylmaleate. The chain is 3-isopropylmalate dehydratase large subunit from Variovorax paradoxus (strain S110).